Reading from the N-terminus, the 313-residue chain is N-acetyl-gamma-glutamyl-phosphate reductase 2 (313 aa).

Residue C117 is part of the active site.

The protein belongs to the NAGSA dehydrogenase family. Type 2 subfamily.

Its subcellular location is the cytoplasm. It carries out the reaction N-acetyl-L-glutamate 5-semialdehyde + phosphate + NADP(+) = N-acetyl-L-glutamyl 5-phosphate + NADPH + H(+). The protein operates within amino-acid biosynthesis; L-arginine biosynthesis; N(2)-acetyl-L-ornithine from L-glutamate: step 3/4. In terms of biological role, catalyzes the NADPH-dependent reduction of N-acetyl-5-glutamyl phosphate to yield N-acetyl-L-glutamate 5-semialdehyde. In Pseudomonas putida (strain ATCC 47054 / DSM 6125 / CFBP 8728 / NCIMB 11950 / KT2440), this protein is N-acetyl-gamma-glutamyl-phosphate reductase 2.